The chain runs to 679 residues: Protein FAM178B (679 aa).

A disordered region spans residues 70–113 (PLDQGPRCPARRPCSPASAPAPTSPKKPKIQAPGETFPTDWSPP). The segment covering 75 to 90 (PRCPARRPCSPASAPA) has biased composition (low complexity).

The protein belongs to the FAM178 family.

The sequence is that of Protein FAM178B from Homo sapiens (Human).